The sequence spans 845 residues: Nuclear pore complex protein Nup107 (845 aa).

Disordered regions lie at residues 1-26 (MADS…MPPQ) and 677-702 (QNRP…MASE). Polar residues-rich tracts occupy residues 7–26 (PRSS…MPPQ) and 685–694 (TSHAASSQDN).

Belongs to the nucleoporin Nup84/Nup107 family. Part of the nuclear pore complex (NPC). As to expression, expressed in spermatocytes (at protein level).

It is found in the nucleus. Its subcellular location is the nuclear pore complex. The protein localises to the nucleus envelope. The protein resides in the nucleus membrane. It localises to the cytoplasm. It is found in the cytoskeleton. Its subcellular location is the spindle. The protein localises to the chromosome. The protein resides in the nucleus matrix. Functionally, plays a role in nuclear pore complex (NPC) assembly and maintenance. Required for nuclear import of Mad. Mediates the association between the nuclear pore complex and a subset of active chromatin regions adjacent to lamin-associated domains. Plays a role in double strand break repair by relocalizing the heterochromatic double strand breaks (DSBs) to the nuclear periphery as part of the homologous recombination (HR) repair process. Regulates cytokinesis during spermatocyte meiosis by maintaining type-B lamin Lam localization to the spindle envelope. Regulates female gonad development and oogenesis. This chain is Nuclear pore complex protein Nup107, found in Drosophila melanogaster (Fruit fly).